The following is a 96-amino-acid chain: Prokineticin Bo8 (96 aa).

The first 19 residues, M1–G19, serve as a signal peptide directing secretion. 5 disulfide bridges follow: C26/C38, C32/C50, C37/C78, C60/C86, and C80/C95.

As to expression, expressed by the skin glands.

The protein localises to the secreted. Its function is as follows. Potent agonist for both PKR1/PROKR1 and PKR2/PROKR2, and inducer of a potent and long-lasting hyperalgesia. Also potentiates capsaicin-induced TRPV1 current, when tested on DRG neurons. At subnanomolar concentrations, this protein both induces potent chemotaxis of macrophages and stimulates LPS-induced production of the pro-inflammatory cytokines IL-1 and IL-12. In vivo, potently stimulates the contraction of the guinea-pig gastrointestinal (GI) smooth muscle (nanomolar concentration). This is Prokineticin Bo8 from Bombina orientalis (Oriental fire-bellied toad).